An 89-amino-acid chain; its full sequence is Co-chaperonin GroES (89 aa).

The protein belongs to the GroES chaperonin family. In terms of assembly, heptamer of 7 subunits arranged in a ring. Interacts with the chaperonin GroEL.

The protein resides in the cytoplasm. Its function is as follows. Together with the chaperonin GroEL, plays an essential role in assisting protein folding. The GroEL-GroES system forms a nano-cage that allows encapsulation of the non-native substrate proteins and provides a physical environment optimized to promote and accelerate protein folding. GroES binds to the apical surface of the GroEL ring, thereby capping the opening of the GroEL channel. The sequence is that of Co-chaperonin GroES from Pseudothermotoga lettingae (strain ATCC BAA-301 / DSM 14385 / NBRC 107922 / TMO) (Thermotoga lettingae).